Reading from the N-terminus, the 2841-residue chain is Neurofibromin (2841 aa).

A2 is subject to N-acetylalanine. Residues S866 and S878 each carry the phosphoserine modification. The Ras-GAP domain occupies 1253 to 1484 (HLLYQLLWNM…DLARRFFLDI (232 aa)). Residues 1582–1740 (EKEEFKALKT…ATLALEEDLK (159 aa)) enclose the CRAL-TRIO domain. The segment at 1582–1839 (EKEEFKALKT…RTRWELSQPD (258 aa)) is lipid binding. A phosphoserine mark is found at S2190 and S2469. At T2516 the chain carries Phosphothreonine. 4 positions are modified to phosphoserine: S2517, S2523, S2525, and S2545. A Bipartite nuclear localization signal motif is present at residues 2557 to 2573 (KRQEMESGITTPPKMRR). Position 2567 is a phosphothreonine (T2567). A phosphoserine mark is found at S2599, S2804, and S2819. The disordered stretch occupies residues 2786-2841 (SLATSQHSPGLDKENVELSPTAGHCNSGRTRHGSASQVQKQRSAGSFKRNSIKKIV). The segment covering 2818–2829 (GSASQVQKQRSA) has biased composition (polar residues).

Interacts with HTR6. Interacts with SPRED2. Post-translationally, ubiquitinated by RNF7/RBX2, leading to its degradation. Expressed predominantly in brain, spinal cord and testis. As to expression, expressed predominantly in adrenal gland, kidney, ovary and lung. In terms of tissue distribution, widely and more weakly expressed. Predominantly expressed in adrenal gland. Widely and more weakly expressed. Expressed mainly in testis.

The protein localises to the nucleus. It is found in the nucleolus. The protein resides in the cell membrane. Its function is as follows. Stimulates the GTPase activity of Ras. NF1 shows greater affinity for Ras GAP, but lower specific activity. May be a regulator of Ras activity. The protein is Neurofibromin (Nf1) of Mus musculus (Mouse).